The sequence spans 316 residues: Ribosomal RNA small subunit methyltransferase H (316 aa).

Residues Ser-35–His-37, Asp-55, Phe-84, Asp-105, and Gln-112 each bind S-adenosyl-L-methionine.

Belongs to the methyltransferase superfamily. RsmH family.

The protein resides in the cytoplasm. The catalysed reaction is cytidine(1402) in 16S rRNA + S-adenosyl-L-methionine = N(4)-methylcytidine(1402) in 16S rRNA + S-adenosyl-L-homocysteine + H(+). In terms of biological role, specifically methylates the N4 position of cytidine in position 1402 (C1402) of 16S rRNA. This chain is Ribosomal RNA small subunit methyltransferase H, found in Streptococcus pyogenes serotype M18 (strain MGAS8232).